The following is a 258-amino-acid chain: Protein T1 (258 aa).

An N-terminal signal peptide occupies residues 1–17; the sequence is MRRLCIILLVYVYATFA. N-linked (GlcNAc...) asparagine; by host glycosylation is found at asparagine 67, asparagine 151, and asparagine 172.

Belongs to the poxviruses A41 family.

The protein is Protein T1 of Rabbit fibroma virus (strain Kasza) (RFV).